A 256-amino-acid polypeptide reads, in one-letter code: uncharacterized protein (256 aa).

The N-terminal stretch at 1 to 22 is a signal peptide; it reads MGYLKRIGMCISLLIVIIFVTS. A lipid anchor (N-palmitoyl cysteine) is attached at Cys23. Cys23 is lipidated: S-diacylglycerol cysteine.

Belongs to the staphylococcal tandem lipoprotein family.

The protein resides in the cell membrane. This is an uncharacterized protein from Staphylococcus aureus (strain MRSA252).